The chain runs to 92 residues: Non-specific lipid-transfer protein A (92 aa).

Intrachain disulfides connect Cys-3-Cys-51, Cys-13-Cys-28, Cys-29-Cys-74, and Cys-49-Cys-88.

The protein belongs to the plant LTP family.

In terms of biological role, plant non-specific lipid-transfer proteins transfer phospholipids as well as galactolipids across membranes. May play a role in wax or cutin deposition in the cell walls of expanding epidermal cells and certain secretory tissues. The chain is Non-specific lipid-transfer protein A from Ricinus communis (Castor bean).